The following is a 268-amino-acid chain: MECNDPFVVALKDKGYSLVAYPKTSIRPLHIYEHTIKNAFKRIWIQSEAQPTSGFIKSLFSDKIHGAIGLSDGQGIDIDLRKTNSLSSAVAAKILESYFQDSAPSFDLAFENSSSVIFHIEEIITTDADEISLRNWLNDNQNELREIYKEEIKKGNFFVATSLLRAKKMRMQFERKNKGELGVDVSKIKNLPVDAKLESKIEGSTYDRLVFETPDEGIVFGVKLVRLFFSDNGILTIDKKQDFNRVLGENMALNLFTEIQDAGFIEVT.

C3 carries the S-palmitoyl cysteine lipid modification. Beta stranded transmembrane passes span I78–I94, A103–E121, K168–V185, and A195–F211. The segment at G248–T268 is C-terminal region.

It belongs to the bacterial gasdermin family. In terms of assembly, monomer in solution. Forms large, homooligomeric ring-shaped pores when inserted in membranes. Post-translationally, cleavage by the adjacently encoded protease (G563DRAFT_02009) between Leu-247 and Gly-248 relieves autoinhibition, releasing the N-terminus which initiates loss of cell integrity. Palmitoylation helps stabilize the inactive state; may self-palmitoylate. Palmitoylation is not required for permeabilization of liposomes by the ring-like pores in vitro. Palmitoylation plays a significant role in pore formation.

Its subcellular location is the cytoplasm. It is found in the cell inner membrane. Its activity is regulated as follows. The full-length protein before cleavage is inactive: intramolecular interactions between the N-terminal domain and the C-terminal region, as well as the lipid modification, mediate autoinhibition. The pyroptosis-like-inducing activity is carried by the released N-terminal domain (gasdermin bGSDM, N-terminus). In terms of biological role, precursor of a pore-forming protein involved in defense against bacteriophages. Cleavage of this precursor by its dedicated, neighboring protease (G563DRAFT_02009) releases the active moiety (gasdermin bGSDM, N-terminus) which inserts into membranes, forming pores and triggering cell death. Expression of bGSDM and its protease is highly toxic in E.coli. Cells expressing the gene pair stop dividing and lose membrane integrity. Both proteins are required to kill E.coli. Pore-forming protein that causes membrane permeabilization via a pyroptosis-like activity. Makes ring-like pores with walls about 50 Angstroms thick and an interior pore diameter of 200-300 Angstroms, when integrated in liposomes. In Runella zeae (strain ATCC BAA-293 / DSM 19591 / LMG 21438 / NS12), this protein is Gasdermin bGSDM.